Consider the following 84-residue polypeptide: Large ribosomal subunit protein bL27 (84 aa).

A disordered region spans residues 1-20 (MAHKKGGGSTKNGRDSNPKY).

Belongs to the bacterial ribosomal protein bL27 family.

The sequence is that of Large ribosomal subunit protein bL27 (rpmA) from Prosthecochloris vibrioformis (Chlorobium vibrioforme).